Here is a 221-residue protein sequence, read N- to C-terminus: MTLAAKLIVLVYVALCFVNESTSQDHSNIYHETLTSLHHKGEFHVKGLFQTPVQYAGDETVLDLYVKKNSGGDVKAVYCLGNKRSIMNQFTDTGTTTDGYDLWRVKIESTPEHISRMISHGPIACNLIWEKVITPAKGNVAEIKGLDLVNFNVNFPRQSTDNVVSRPSTNSQTVDKLLNDTLAKARGVPMSVSVISGICAIILVIFPIFITIANLRRVYLH.

The first 23 residues, 1–23, serve as a signal peptide directing secretion; the sequence is MTLAAKLIVLVYVALCFVNESTS. Asparagine 19 and asparagine 179 each carry an N-linked (GlcNAc...) asparagine; by host glycan. Residues 24 to 191 are Extracellular-facing; it reads QDHSNIYHET…LAKARGVPMS (168 aa). A helical membrane pass occupies residues 192–212; that stretch reads VSVISGICAIILVIFPIFITI. Topologically, residues 213–221 are cytoplasmic; the sequence is ANLRRVYLH.

The protein resides in the host membrane. The chain is Putative transmembrane protein ORF25 from Ostreid herpesvirus 1 (isolate France) (OsHV-1).